Reading from the N-terminus, the 312-residue chain is Mycothiol acetyltransferase (312 aa).

N-acetyltransferase domains lie at 8–136 (PIIR…LPMP) and 149–301 (LRLD…HQDH). Glu-38 contributes to the 1D-myo-inositol 2-(L-cysteinylamino)-2-deoxy-alpha-D-glucopyranoside binding site. Residues 77–79 (LMV) and 85–90 (RQGIAT) each bind acetyl-CoA. 1D-myo-inositol 2-(L-cysteinylamino)-2-deoxy-alpha-D-glucopyranoside is bound by residues Glu-175, Lys-215, and Glu-226. Residues 230 to 232 (LGV) and 237 to 243 (EGKGVGR) each bind acetyl-CoA. Tyr-264 provides a ligand contact to 1D-myo-inositol 2-(L-cysteinylamino)-2-deoxy-alpha-D-glucopyranoside. Acetyl-CoA is bound at residue 269–274 (NERVVH). The interval 292–312 (PAKPARHQDHGRQSSPQERDA) is disordered. A compositionally biased stretch (basic and acidic residues) spans 297–312 (RHQDHGRQSSPQERDA).

This sequence belongs to the acetyltransferase family. MshD subfamily. As to quaternary structure, monomer.

The catalysed reaction is 1D-myo-inositol 2-(L-cysteinylamino)-2-deoxy-alpha-D-glucopyranoside + acetyl-CoA = mycothiol + CoA + H(+). Catalyzes the transfer of acetyl from acetyl-CoA to desacetylmycothiol (Cys-GlcN-Ins) to form mycothiol. The polypeptide is Mycothiol acetyltransferase (Propionibacterium freudenreichii subsp. shermanii (strain ATCC 9614 / DSM 4902 / CIP 103027 / NCIMB 8099 / CIRM-BIA1)).